Here is a 233-residue protein sequence, read N- to C-terminus: MALDQGAKVFGVDIAASPAPLANHPNYKFLKADLCDKQTPKDVVQACVKMFGGRIDGLLNIAGIMDSNQSVDSVSDEMWDRCIAVNLTAPIRLMREVIAIMREQKSGNIVNVASKAATSGAVSGVAYTASKHGLVGATKNVAWRFKHDNIRCNAVCPGGVVGTGVHNEMDIQKWDKEAMKTMFLIHQSHSCDKDKGIGLRAEDIARPLLFLVSDRSKGINGAILPIDNAWSTI.

NADP(+)-binding residues include Asp33, Arg95, Tyr127, Lys131, and Val160. Catalysis depends on Tyr127, which acts as the Proton donor. The active-site Lowers pKa of active site Tyr is Lys131.

Belongs to the short-chain dehydrogenases/reductases (SDR) family.

Its pathway is secondary metabolite biosynthesis; terpenoid biosynthesis. Its function is as follows. Short chain dehydrogenase; part of the gene cluster that mediates the biosynthesis of terretonin, a fungal meroterpenoid that acts as a mycotoxin. The first step of the pathway is the synthesis of 3,5-dimethylorsellinic acid (DMOA) by the polyketide synthase trt4. DMOA is then prenylated into farnesyl-DMOA by the polyprenyl transferase trt2. Methylation by the methyltransferase trt5 then leads to farnesyl-DMOA methyl ester which is further subject to epoxidation by the FAD-dependent monooxygenase trt8 to yield epoxyfarnesyl-DMOA methyl ester. Cyclization of epoxyfarnesyl-DMOA methyl ester by the terpene cyclase trt1 leads to a tetracycle intermediate which is in turn converted to preterretonin. Dehydrogenase trt9 comes next to transform preterretonin to preterrenoid. The FAD-dependent monooxygenase trt3 is then required for the C-hydroxylation at C16 of preterrenoid to yield terrenoid. The cytochrome P450 trt6 catalyzes three successive oxidations to transform terrenoid into an unstable intermediate, which then undergoes the D-ring expansion and unusual rearrangement of the methoxy group to afford the core skeleton of terretonin. Trt14 catalyzes the D-ring expansion of terretonin involving intramolecular methoxy rearrangement as well as the hydrolysis of the expanded D-ring and the methyl ester moiety. Finally, the nonheme iron-dependent dioxygenase trt7 accomplishes the last two oxidation reactions steps to complete the biosynthesis of terretonin. Terretonin C is produced via spontaneous decarboxylation of the terretonin precursor. Another shunt product of the terretonin biosynthesis is dihydrofarnesyl-DMOA, derived from epoxyfarnesyl-DMOA through hydrolysis of the epoxide. In Aspergillus terreus (strain NIH 2624 / FGSC A1156), this protein is Short chain dehydrogenase trt9.